Consider the following 440-residue polypeptide: Trigger factor (440 aa).

The PPIase FKBP-type domain occupies 163–248 (NDTVSINFKG…INSIKEKVLP (86 aa)).

The protein belongs to the FKBP-type PPIase family. Tig subfamily.

It localises to the cytoplasm. It carries out the reaction [protein]-peptidylproline (omega=180) = [protein]-peptidylproline (omega=0). Involved in protein export. Acts as a chaperone by maintaining the newly synthesized protein in an open conformation. Functions as a peptidyl-prolyl cis-trans isomerase. This Finegoldia magna (strain ATCC 29328 / DSM 20472 / WAL 2508) (Peptostreptococcus magnus) protein is Trigger factor.